Consider the following 94-residue polypeptide: Large ribosomal subunit protein bL27 (94 aa).

Residues 1–9 (MLKLNLQFF) constitute a propeptide that is removed on maturation. The disordered stretch occupies residues 12 to 32 (KKGVSSTKNGRDSESKRLGAK). The span at 20–32 (NGRDSESKRLGAK) shows a compositional bias: basic and acidic residues.

This sequence belongs to the bacterial ribosomal protein bL27 family. Post-translationally, the N-terminus is cleaved by ribosomal processing cysteine protease Prp.

In Staphylococcus carnosus (strain TM300), this protein is Large ribosomal subunit protein bL27.